Consider the following 265-residue polypeptide: Palmitoyltransferase ZDHHC21 (265 aa).

Residues 1-16 (MGLRIHFVVDPHGWCC) lie on the Cytoplasmic side of the membrane. The helical transmembrane segment at 17-37 (MGLIVFVWLYNFFLIPKIVLF) threads the bilayer. The Extracellular segment spans residues 38-44 (PHYEEGH). The chain crosses the membrane as a helical span at residues 45-65 (IPGILIIIFYGIAMFCLVALV). The Cytoplasmic portion of the chain corresponds to 66–133 (RASITDPGRL…NNCVGEDNHW (68 aa)). The DHHC domain occupies 90-140 (ELCNKCNLMRPKRSHHCSRCGHCVRRMDHHCPWINNCVGEDNHWLFLQLCF). The S-palmitoyl cysteine intermediate role is filled by Cys-120. The chain crosses the membrane as a helical span at residues 134–154 (LFLQLCFYTELLTCYALMFSF). Residues 155–185 (CHYYYFLPLKKRNLDLFVVRHELAIMRLAAF) lie on the Extracellular side of the membrane. A helical membrane pass occupies residues 186–206 (MGITMLVGITGLFYTQLIGII). At 207–265 (TDTTSIEKMSNCCEEISRPRKPWQQTFSEVFGTRWKILWFIPFRRRQPLRVPYHFANHV) the chain is on the cytoplasmic side.

This sequence belongs to the DHHC palmitoyltransferase family.

It is found in the golgi apparatus membrane. The protein resides in the golgi apparatus. The protein localises to the cis-Golgi network membrane. Its subcellular location is the cell membrane. The enzyme catalyses L-cysteinyl-[protein] + hexadecanoyl-CoA = S-hexadecanoyl-L-cysteinyl-[protein] + CoA. Palmitoyltransferase that catalyzes the addition of palmitate onto various protein substrates. Palmitoylates sex steroid hormone receptors, including ESR1, PGR and AR, thereby regulating their targeting to the plasma membrane. This affects rapid intracellular signaling by sex hormones via ERK and AKT kinases and the generation of cAMP, but does not affect that mediated by their nuclear receptor. Palmitoylates FYN, regulates its localization in hair follicles and plays a key role in epidermal homeostasis and hair follicle differentiation. Through the palmitoylation of PLCB1 and the regulation of PLCB1 downstream signaling may indirectly regulate the function of the endothelial barrier and the adhesion of leukocytes to the endothelium. Also has a palmitoyltransferase activity toward ADRA1D, positively regulating its activity and expression and may thereby play a role in vascular contraction. May also palmitoylate eNOS and LCK. This Bos taurus (Bovine) protein is Palmitoyltransferase ZDHHC21.